The sequence spans 580 residues: Anaphase-promoting complex subunit 7 (580 aa).

TPR repeat units lie at residues 50-83, 107-140, 141-175, 253-286, 321-354, 356-388, 390-421, 422-456, 458-490, and 491-523; these read IISF…LFKV, YELK…SRGL, DTHL…CPLC, VLEK…DPYY, AETW…KESH, FAHS…SKNI, TARE…SPDY, SKTM…SPHC, DTVL…QETD, and LMHT…NPQY. The segment at 539-580 is disordered; it reads GIDPDQELDQENDDDDQEEGEGENDQEENDDDDNDDDDEYIS. Acidic residues predominate over residues 542–580; sequence PDQELDQENDDDDQEEGEGENDQEENDDDDNDDDDEYIS.

Belongs to the APC7 family. As to quaternary structure, the APC/C is composed of at least 13 subunits that stay tightly associated throughout the cell cycle: anapc1, anapc2, anapc3, anapc4, anapc5, anapc6, anapc7, anapc8, anapc10, anapc11, cdc20, cdc26 and cdh1.

Its subcellular location is the nucleus. Its pathway is protein modification; protein ubiquitination. In terms of biological role, component of the anaphase promoting complex/cyclosome (APC/C), a cell cycle-regulated E3 ubiquitin-protein ligase complex that controls progression through mitosis and the G1 phase of the cell cycle. The chain is Anaphase-promoting complex subunit 7 (anapc7) from Dictyostelium discoideum (Social amoeba).